The chain runs to 284 residues: Cell division protein DivIB (284 aa).

Residues 1–10 (MAWLRKKEQQ) show a composition bias toward basic and acidic residues. The disordered stretch occupies residues 1 to 38 (MAWLRKKEQQSDPLTPWQQYQARQQQTPRHDRRQKPKL). The Cytoplasmic segment spans residues 1–56 (MAWLRKKEQQSDPLTPWQQYQARQQQTPRHDRRQKPKLDVNLPKIQTLRRRKLVKN). A helical membrane pass occupies residues 57-77 (LVLILLPLLLLLGVFGYFASP). The Extracellular portion of the chain corresponds to 78–284 (LSKVGLVSVQ…YSSSEKSSND (207 aa)). Residues 79-150 (SKVGLVSVQG…NRIIIKTSEY (72 aa)) enclose the POTRA domain.

The protein belongs to the FtsQ/DivIB family. DivIB subfamily.

The protein localises to the cell membrane. Its function is as follows. Cell division protein that may be involved in stabilizing or promoting the assembly of the division complex. This chain is Cell division protein DivIB, found in Lacticaseibacillus rhamnosus (strain ATCC 53103 / LMG 18243 / GG) (Lactobacillus rhamnosus).